A 706-amino-acid polypeptide reads, in one-letter code: Elongation factor G (706 aa).

In terms of domain architecture, tr-type G spans 8–297 (SYVRNIGIGA…AVVDYLPSPN (290 aa)). Residues 17-24 (AHIDAGKT), 95-99 (DTPGH), and 149-152 (NKMD) each bind GTP.

This sequence belongs to the TRAFAC class translation factor GTPase superfamily. Classic translation factor GTPase family. EF-G/EF-2 subfamily.

It localises to the cytoplasm. Its function is as follows. Catalyzes the GTP-dependent ribosomal translocation step during translation elongation. During this step, the ribosome changes from the pre-translocational (PRE) to the post-translocational (POST) state as the newly formed A-site-bound peptidyl-tRNA and P-site-bound deacylated tRNA move to the P and E sites, respectively. Catalyzes the coordinated movement of the two tRNA molecules, the mRNA and conformational changes in the ribosome. This chain is Elongation factor G, found in Orientia tsutsugamushi (strain Ikeda) (Rickettsia tsutsugamushi).